The chain runs to 435 residues: Monodictyphenone cluster transcription factor (435 aa).

Positions 23-50 form a DNA-binding region, zn(2)-C6 fungal-type; that stretch reads CHACALSKLKCSQDKPTCSRCVKRGTAC. Residues 117-147 are disordered; sequence QYHQRTPSYPESIPSLLSSTGPGTSATSPLT. A compositionally biased stretch (low complexity) spans 130-147; it reads PSLLSSTGPGTSATSPLT.

Its subcellular location is the nucleus. Its function is as follows. Transcription factor that regulates the expression of the gene cluster that mediates the biosynthesis of monodictyphenone, a prenyl xanthone derivative. This chain is Monodictyphenone cluster transcription factor, found in Emericella nidulans (strain FGSC A4 / ATCC 38163 / CBS 112.46 / NRRL 194 / M139) (Aspergillus nidulans).